A 161-amino-acid chain; its full sequence is Small ribosomal subunit protein uS15 (161 aa).

A compositionally biased stretch (basic residues) spans 1–13 (MAGKRRKKGRSHS). The segment at 1–22 (MAGKRRKKGRSHSTRPATPTVP) is disordered.

It belongs to the universal ribosomal protein uS15 family. In terms of assembly, part of the 30S ribosomal subunit.

The sequence is that of Small ribosomal subunit protein uS15 from Hyperthermus butylicus (strain DSM 5456 / JCM 9403 / PLM1-5).